Reading from the N-terminus, the 373-residue chain is Erythronate-4-phosphate dehydrogenase (373 aa).

Residues S45 and T66 each contribute to the substrate site. D146 and T173 together coordinate NAD(+). R206 is a catalytic residue. Residue D230 coordinates NAD(+). E235 is an active-site residue. H252 serves as the catalytic Proton donor. G255 contributes to the NAD(+) binding site. Y256 provides a ligand contact to substrate.

This sequence belongs to the D-isomer specific 2-hydroxyacid dehydrogenase family. PdxB subfamily. Homodimer.

The protein resides in the cytoplasm. It catalyses the reaction 4-phospho-D-erythronate + NAD(+) = (R)-3-hydroxy-2-oxo-4-phosphooxybutanoate + NADH + H(+). It functions in the pathway cofactor biosynthesis; pyridoxine 5'-phosphate biosynthesis; pyridoxine 5'-phosphate from D-erythrose 4-phosphate: step 2/5. Catalyzes the oxidation of erythronate-4-phosphate to 3-hydroxy-2-oxo-4-phosphonooxybutanoate. The sequence is that of Erythronate-4-phosphate dehydrogenase from Saccharophagus degradans (strain 2-40 / ATCC 43961 / DSM 17024).